A 551-amino-acid chain; its full sequence is MFASAGQQHPQIVPKEEESILNYLLEVRSSLAKLKQNRTQYLNSKDVQTTYQHVLTKVRELDDIRKNSHETPAKSAATLIHSTELHNRVDSVLDDVFQLLSLCFLTVGLKNSAPATYASLSTVESLLEHLNESNVFTHHDLSPIKERLEEISKIVEQKNSSPAYDEDGNDDRLREIDNERKKNKIEEDLLLRAKLKHCKDEYDILEGKLEEIDPSLSTVMEKLFRIRRGLLSLVASAKKTMSKSDINTNSLLQEQNDLQTNNESLTDDKHLVSQEYVHEKLSVLKNELSELESNRDDSGKFKSLESHQVAEKGQSVLNGLLDDCHDLVNDLSHQKNGGLTLDPYLQPIYEQLIDIKTTLENLMITRRWTLRETDLFSYQKKLNEIDNKRINGKFPTKSQDSKGQSILLYLLRRCYAIIYKLLESSEPVSEALQPIHNQLSTVRRCLLELKRMGGVNNERELYPYQMKLASLDNLRTEGIFYDSDGNIPEGQGILNALLAECFDILHELKVEAEEKAQNSTSSDGSDDDDNGESGIDSNSNDSEPESEYQQE.

2 coiled-coil regions span residues 174–213 and 249–300; these read REIDNERKKNKIEEDLLLRAKLKHCKDEYDILEGKLEEID and NSLL…DSGK. A disordered region spans residues 513-551; the sequence is EEKAQNSTSSDGSDDDDNGESGIDSNSNDSEPESEYQQE. A compositionally biased stretch (low complexity) spans 532-541; sequence ESGIDSNSND. Acidic residues predominate over residues 542 to 551; it reads SEPESEYQQE.

The protein belongs to the CUB1 family. Monomer. Post-translationally, phosphorylated by PKA in vitro.

It localises to the cytoplasm. Its subcellular location is the nucleus. Involved in bleomycin tolerance with links to DNA repair and/or proteasome function. This is Cu(2+) suppressing and bleomycin sensitive protein 1 (CUB1) from Saccharomyces cerevisiae (strain ATCC 204508 / S288c) (Baker's yeast).